The primary structure comprises 229 residues: Rhamnosyl O-methyltransferase (229 aa).

Residues 1 to 23 form the signal peptide; it reads MERVRQMFSCVSGMIYRPTDSIA.

This sequence belongs to the rhamnosyl O-methyltransferase family.

Catalyzes the O-methylation of the hydroxyl group located on C-2 of the first rhamnosyl residue linked to the phenolic group of glycosylated phenolphthiocerol dimycocerosates (PGL) and p-hydroxybenzoic acid derivatives (p-HBAD). The polypeptide is Rhamnosyl O-methyltransferase (Mycobacterium leprae (strain TN)).